The following is a 98-amino-acid chain: NADH-ubiquinone oxidoreductase chain 4L (98 aa).

The next 3 helical transmembrane spans lie at 1-21, 29-49, and 61-81; these read MSLT…GLLM, SLLC…VTIL, and IILL…LVMV.

This sequence belongs to the complex I subunit 4L family. As to quaternary structure, core subunit of respiratory chain NADH dehydrogenase (Complex I) which is composed of 45 different subunits.

The protein localises to the mitochondrion inner membrane. The catalysed reaction is a ubiquinone + NADH + 5 H(+)(in) = a ubiquinol + NAD(+) + 4 H(+)(out). Its function is as follows. Core subunit of the mitochondrial membrane respiratory chain NADH dehydrogenase (Complex I) which catalyzes electron transfer from NADH through the respiratory chain, using ubiquinone as an electron acceptor. Part of the enzyme membrane arm which is embedded in the lipid bilayer and involved in proton translocation. This is NADH-ubiquinone oxidoreductase chain 4L (MT-ND4L) from Sturnira lilium (Lesser yellow-shouldered bat).